Consider the following 466-residue polypeptide: Protein hob1 (466 aa).

One can recognise a BAR domain in the interval 17–269 (LRSKFNVGEI…RGDVKDRAEA (253 aa)). Coiled-coil stretches lie at residues 31–67 (IYED…LNHQ) and 177–204 (EKKL…LKEE). The disordered stretch occupies residues 280–342 (PTYKRPGMGP…ASDYSTPSAG (63 aa)). The span at 294–303 (ATASSSSSFS) shows a compositional bias: low complexity. S298, S299, S301, and S303 each carry phosphoserine. Residues 407 to 466 (PAAEHVVALYDYAAQAAGDLSFHAGDRIEVVSRTDNQNEWWIGRLNGAQGQFPGNYVQLE) form the SH3 domain.

Functionally, has a role in DNA damage signaling as a part of stress response processes. In Schizosaccharomyces pombe (strain 972 / ATCC 24843) (Fission yeast), this protein is Protein hob1 (hob1).